The sequence spans 107 residues: MDLNNRLTEDEALEQAYDIFLELAADNLDPADILLFNLQFEERGGAELFDPAEDWAEHVDFDLNPDFFAEVVIGLAEQEGEEITDIFARVLICREKDHKLCHILWKE.

Belongs to the putative dsDNA mimic protein family.

Functionally, may act as a double-stranded DNA (dsDNA) mimic. Probably regulates the activity of a dsDNA-binding protein. This is Putative double-stranded DNA mimic protein ECA2319 from Pectobacterium atrosepticum (strain SCRI 1043 / ATCC BAA-672) (Erwinia carotovora subsp. atroseptica).